Here is a 63-residue protein sequence, read N- to C-terminus: Alpha-conotoxin-like PuSG1.1 (63 aa).

Residues 1–21 (MRCLAFLVVTLLLFTATATTG) form the signal peptide. A propeptide spanning residues 22–43 (ASNGMNAAASGEAPDSISLAVR) is cleaved from the precursor. Intrachain disulfides connect Cys46-Cys52 and Cys47-Cys60. A lacks the Ser-Xaa-Pro motif that is crucial for potent interaction with nAChR region spans residues 48 to 50 (PDP).

It belongs to the conotoxin A superfamily. In terms of tissue distribution, expressed by the salivary gland.

The protein localises to the secreted. Alpha-conopeptides-like may act on postsynaptic membranes, they bind to the nicotinic acetylcholine receptors (nAChR) and thus inhibit them. Has possibly a distinct nAChR binding mode from other alpha-conotoxins, due to a different three residue motif (lacks the Ser-Xaa-Pro motif). This is Alpha-conotoxin-like PuSG1.1 from Conus pulicarius (Flea-bitten cone).